A 239-amino-acid chain; its full sequence is Orotidine 5'-phosphate decarboxylase (239 aa).

Substrate is bound by residues Asp-12, Lys-34, 61–70 (DLKFHDIPNT), Thr-125, Arg-188, Gln-197, Gly-217, and Arg-218. Lys-63 acts as the Proton donor in catalysis.

The protein belongs to the OMP decarboxylase family. Type 1 subfamily. Homodimer.

The enzyme catalyses orotidine 5'-phosphate + H(+) = UMP + CO2. The protein operates within pyrimidine metabolism; UMP biosynthesis via de novo pathway; UMP from orotate: step 2/2. Catalyzes the decarboxylation of orotidine 5'-monophosphate (OMP) to uridine 5'-monophosphate (UMP). The protein is Orotidine 5'-phosphate decarboxylase of Syntrophomonas wolfei subsp. wolfei (strain DSM 2245B / Goettingen).